Consider the following 638-residue polypeptide: Probable inactive receptor kinase At4g23740 (638 aa).

The signal sequence occupies residues Met-1 to Ser-24. LRR repeat units follow at residues Ala-94–Lys-117, Asp-118–Val-139, Asn-142–Lys-165, Arg-166–Ser-188, and Ser-189–Asn-198. A helical membrane pass occupies residues Val-257–Leu-277. Positions Arg-337 to Val-608 constitute a Protein kinase domain. Phosphoserine is present on Ser-339. Position 343–351 (Leu-343–Thr-351) interacts with ATP. Thr-360 carries the phosphothreonine modification. Position 365 (Lys-365) interacts with ATP. A phosphoserine mark is found at Ser-416 and Ser-419. Phosphothreonine occurs at positions 436 and 509. The residue at position 513 (Ser-513) is a Phosphoserine. The interval Arg-612 to Ile-638 is disordered. Residues Thr-613 to Ser-625 are compositionally biased toward basic and acidic residues. Over residues Asn-627 to Ile-638 the composition is skewed to polar residues.

It belongs to the protein kinase superfamily.

Its subcellular location is the membrane. The polypeptide is Probable inactive receptor kinase At4g23740 (Arabidopsis thaliana (Mouse-ear cress)).